The chain runs to 101 residues: MTRKSIQEREKKRIKLAKTFLKKRKELKKIISDPNIGNDIRWNAVLKLQSLPRDSSLSRQRNRCSQTSRPHAFLRKFGLSRIKLREAAMRGEIPGLRKSSW.

This sequence belongs to the universal ribosomal protein uS14 family. In terms of assembly, part of the 30S ribosomal subunit. Contacts proteins S3 and S10.

Binds 16S rRNA, required for the assembly of 30S particles and may also be responsible for determining the conformation of the 16S rRNA at the A site. This is Small ribosomal subunit protein uS14 from Wigglesworthia glossinidia brevipalpis.